The primary structure comprises 725 residues: Catalase-peroxidase (725 aa).

The segment at residues 90-213 (WHSAGTYRTG…LAAVQMGLIY (124 aa)) is a cross-link (tryptophyl-tyrosyl-methioninium (Trp-Tyr) (with M-239)). Catalysis depends on His-91, which acts as the Proton acceptor. The segment at residues 213–239 (YVNPEGPNGNPDPVAAAKDIRETFARM) is a cross-link (tryptophyl-tyrosyl-methioninium (Tyr-Met) (with W-90)). His-254 is a heme b binding site.

The protein belongs to the peroxidase family. Peroxidase/catalase subfamily. As to quaternary structure, homodimer or homotetramer. It depends on heme b as a cofactor. Post-translationally, formation of the three residue Trp-Tyr-Met cross-link is important for the catalase, but not the peroxidase activity of the enzyme.

The catalysed reaction is H2O2 + AH2 = A + 2 H2O. It carries out the reaction 2 H2O2 = O2 + 2 H2O. In terms of biological role, bifunctional enzyme with both catalase and broad-spectrum peroxidase activity. This Hahella chejuensis (strain KCTC 2396) protein is Catalase-peroxidase.